The following is a 150-amino-acid chain: UPF0756 membrane protein PC1_1142 (150 aa).

The next 4 membrane-spanning stretches (helical) occupy residues 1 to 21 (MAYL…GIIS), 51 to 71 (YGLS…IASG), 82 to 102 (FLHW…WLGG), and 127 to 147 (ALFR…SLLI).

The protein belongs to the UPF0756 family.

The protein resides in the cell membrane. The chain is UPF0756 membrane protein PC1_1142 from Pectobacterium carotovorum subsp. carotovorum (strain PC1).